The chain runs to 326 residues: Fructose-1,6-bisphosphatase class 1 2 (326 aa).

Mg(2+) is bound by residues glutamate 84, aspartate 103, leucine 105, and aspartate 106. Residues 106–109 (DGSS), asparagine 198, and lysine 262 contribute to the substrate site. Mg(2+) is bound at residue glutamate 268.

Belongs to the FBPase class 1 family. As to quaternary structure, homotetramer. Mg(2+) is required as a cofactor.

The protein resides in the cytoplasm. The enzyme catalyses beta-D-fructose 1,6-bisphosphate + H2O = beta-D-fructose 6-phosphate + phosphate. Its pathway is carbohydrate biosynthesis; gluconeogenesis. The polypeptide is Fructose-1,6-bisphosphatase class 1 2 (Pseudoalteromonas translucida (strain TAC 125)).